The chain runs to 355 residues: Holliday junction branch migration complex subunit RuvB (355 aa).

Positions T4–Y190 are large ATPase domain (RuvB-L). Residues L29, R30, G71, K74, T75, T76, E137–Y139, R180, Y190, and R227 each bind ATP. Position 75 (T75) interacts with Mg(2+). The small ATPAse domain (RuvB-S) stretch occupies residues D191–D261. Residues P264–A355 form a head domain (RuvB-H) region. DNA contacts are provided by R300, R319, and R324.

This sequence belongs to the RuvB family. As to quaternary structure, homohexamer. Forms an RuvA(8)-RuvB(12)-Holliday junction (HJ) complex. HJ DNA is sandwiched between 2 RuvA tetramers; dsDNA enters through RuvA and exits via RuvB. An RuvB hexamer assembles on each DNA strand where it exits the tetramer. Each RuvB hexamer is contacted by two RuvA subunits (via domain III) on 2 adjacent RuvB subunits; this complex drives branch migration. In the full resolvosome a probable DNA-RuvA(4)-RuvB(12)-RuvC(2) complex forms which resolves the HJ.

The protein localises to the cytoplasm. The catalysed reaction is ATP + H2O = ADP + phosphate + H(+). The RuvA-RuvB-RuvC complex processes Holliday junction (HJ) DNA during genetic recombination and DNA repair, while the RuvA-RuvB complex plays an important role in the rescue of blocked DNA replication forks via replication fork reversal (RFR). RuvA specifically binds to HJ cruciform DNA, conferring on it an open structure. The RuvB hexamer acts as an ATP-dependent pump, pulling dsDNA into and through the RuvAB complex. RuvB forms 2 homohexamers on either side of HJ DNA bound by 1 or 2 RuvA tetramers; 4 subunits per hexamer contact DNA at a time. Coordinated motions by a converter formed by DNA-disengaged RuvB subunits stimulates ATP hydrolysis and nucleotide exchange. Immobilization of the converter enables RuvB to convert the ATP-contained energy into a lever motion, pulling 2 nucleotides of DNA out of the RuvA tetramer per ATP hydrolyzed, thus driving DNA branch migration. The RuvB motors rotate together with the DNA substrate, which together with the progressing nucleotide cycle form the mechanistic basis for DNA recombination by continuous HJ branch migration. Branch migration allows RuvC to scan DNA until it finds its consensus sequence, where it cleaves and resolves cruciform DNA. The polypeptide is Holliday junction branch migration complex subunit RuvB (Burkholderia vietnamiensis (strain G4 / LMG 22486) (Burkholderia cepacia (strain R1808))).